Consider the following 596-residue polypeptide: Trehalase (596 aa).

The first 23 residues, 1–23 (MFKLPTISLLLVSWSCLVALSQA), serve as a signal peptide directing secretion. Substrate is bound by residues R193, 200-201 (WD), N237, and 246-248 (RSQ). N-linked (GlcNAc...) asparagine glycosylation is found at N288 and N293. Residues 303–323 (SSGPRPESYREDVETGEEFPT) form a disordered region. Residues 307–309 (RPE) and G341 contribute to the substrate site. D343 (proton donor/acceptor) is an active-site residue. N-linked (GlcNAc...) asparagine glycosylation is found at N359, N451, and N516. E541 serves as the catalytic Proton donor/acceptor. E556 is a binding site for substrate.

Belongs to the glycosyl hydrolase 37 family. In the adult brain predominantly expressed in glial cells (at protein level).

It catalyses the reaction alpha,alpha-trehalose + H2O = alpha-D-glucose + beta-D-glucose. Enzyme that cleaves trehalose to produce 2 glucose molecules that can be used by the glycolytic pathway. Glycolysis is essential in glial cells but not in neurons; neurons rely on the citric acid cycle for their energy needs, and on lactate and alanine secreted into the hemolymph by glial cells to fuel it. The sequence is that of Trehalase from Drosophila melanogaster (Fruit fly).